The chain runs to 135 residues: MGYRKLGRTSSQRKALLRDLATDLIVHERIETTEARAKEIRKVVEKLITSGKKGDLHARRQAAAFIRHEVVEVVQVDAKGKDGSTVKKNRPVYALQKLFDDVAPRYAERQGGYTRILKKGPRRGDGAPMVIIELV.

It belongs to the bacterial ribosomal protein bL17 family. Part of the 50S ribosomal subunit. Contacts protein L32.

The polypeptide is Large ribosomal subunit protein bL17 (Listeria innocua serovar 6a (strain ATCC BAA-680 / CLIP 11262)).